The following is a 216-amino-acid chain: Peptide methionine sulfoxide reductase MsrA (216 aa).

Residue Cys-54 is part of the active site.

Belongs to the MsrA Met sulfoxide reductase family.

The catalysed reaction is L-methionyl-[protein] + [thioredoxin]-disulfide + H2O = L-methionyl-(S)-S-oxide-[protein] + [thioredoxin]-dithiol. It catalyses the reaction [thioredoxin]-disulfide + L-methionine + H2O = L-methionine (S)-S-oxide + [thioredoxin]-dithiol. Its function is as follows. Has an important function as a repair enzyme for proteins that have been inactivated by oxidation. Catalyzes the reversible oxidation-reduction of methionine sulfoxide in proteins to methionine. This chain is Peptide methionine sulfoxide reductase MsrA, found in Xylella fastidiosa (strain M12).